Reading from the N-terminus, the 687-residue chain is A-kinase anchor protein 8 (687 aa).

An interaction with MCM2 region spans residues 1 to 195 (MEQGYGGYGA…FLRGRGQGRF (195 aa)). The segment at 1–210 (MEQGYGGYGA…SSTFIRSDPF (210 aa)) is interaction with DPY30. Ser72 bears the Phosphoserine mark. 2 disordered regions span residues 105–124 (KEGG…DRDS) and 185–218 (GFLR…ASEP). Arg109 is subject to Asymmetric dimethylarginine; alternate. At Arg109 the chain carries Omega-N-methylarginine; alternate. Positions 109-118 (RGGISSGGEG) are enriched in gly residues. Positions 109 to 201 (RGGISSGGEG…QGRFQDRSNS (93 aa)) are interaction with DDX5. The residue at position 199 (Ser199) is a Phosphoserine. Omega-N-methylarginine is present on residues Arg232 and Arg276. The segment at 277–379 (SQTRIRDWPR…KQRRRDRMRD (103 aa)) is disordered. 2 stretches are compositionally biased toward basic and acidic residues: residues 280-294 (RIRD…ERFG) and 311-320 (PDAKLARADS). Positions 286-303 (RRRGFERFGPDNMGRKRK) match the Bipartite nuclear localization signal motif. Residue Lys314 forms a Glycyl lysine isopeptide (Lys-Gly) (interchain with G-Cter in SUMO2) linkage. Ser320, Ser325, and Ser336 each carry phosphoserine. The span at 321 to 331 (DGDLSENDDGA) shows a compositional bias: acidic residues. A compositionally biased stretch (basic and acidic residues) spans 335–357 (RSGDEEFRGEDDLCDSRKQRGEK). Positions 384 to 447 (RIQFACSVCK…NKKIEKRRQE (64 aa)) are involved in chromatin-binding. 2 C2H2 AKAP95-type zinc fingers span residues 389–411 (CSVC…SKFH) and 478–501 (CLAC…SVDH). The tract at residues 522 to 565 (SVLNNKHIVKMLEKYLKGEDPFVNETADLETEGDENVGEEKEET) is involved in condensin complex recruitment. Residue Thr552 is modified to Phosphothreonine. Residues 568–585 (EVAAEVLAEVITAAVKAV) form an RII-binding region. The tract at residues 572 to 589 (EVLAEVITAAVKAVEGEG) is required for interaction with MYCBP. The interval 624-659 (QTCEAASETRSIEDKTRGEAAEARNEAAMPTADAGS) is disordered. Positions 633–648 (RSIEDKTRGEAAEARN) are enriched in basic and acidic residues. Ser659 carries the post-translational modification Phosphoserine.

This sequence belongs to the AKAP95 family. In terms of assembly, binds to the PKA RII-alpha regulatory subunit PRKAR2A. Interacts (via C-terminus) with FIGN. Interacts with NCAPD2, CCND3, CCNE1, MCM2, RPS6KA1, DDX5, PDE4A. Interacts with MYCBP; MYCBP is translocated to the nucleus and the interaction prevents the association of the PKA catalytic subunit leading to suppression of PKA activity. Interacts with CCND1, CASP3. Interacts with NFKB1; detetcted in the cytoplasm. Interacts with DPY30; mediating AKAP8 association with at least the MLL4/WBP7 HMT complex. Interacts with HDAC3; increased during mitosis. Interacts with GJA1; in the nucleus and in the nuclear membrane; the nuclear association increases with progress of cell cycle G1, S and G2 phase and decreases in M phase. Phosphorylated on tyrosine residues probably by SRC subfamily protein kinases; multiple phosphorylation is leading to dissociation from nuclear structures implicated in chromatin structural changes.

The protein localises to the nucleus matrix. It is found in the nucleus. Its subcellular location is the nucleolus. The protein resides in the cytoplasm. Its function is as follows. Anchoring protein that mediates the subcellular compartmentation of cAMP-dependent protein kinase (PKA type II). Acts as an anchor for a PKA-signaling complex onto mitotic chromosomes, which is required for maintenance of chromosomes in a condensed form throughout mitosis. Recruits condensin complex subunit NCAPD2 to chromosomes required for chromatin condensation; the function appears to be independent from PKA-anchoring. Specifically involved in recruitment of CAPD2 to, and condensation of maternal but not paternal chromosomes. May help to deliver cyclin D/E to CDK4 to facilitate cell cycle progression. Required for cell cycle G2/M transition and histone deacetylation during mitosis. In mitotic cells recruits HDAC3 to the vicinity of chromatin leading to deacetylation and subsequent phosphorylation at 'Ser-10' of histone H3; in this function may act redundantly with AKAP8L. Involved in nuclear retention of RPS6KA1 upon ERK activation thus inducing cell proliferation. May be involved in regulation of DNA replication by acting as scaffold for MCM2. Enhances HMT activity of the KMT2 family MLL4/WBP7 complex and is involved in transcriptional regulation. In a teratocarcinoma cell line is involved in retinoic acid-mediated induction of developmental genes implicating H3 'Lys-4' methylation. May be involved in recruitment of active CASP3 to the nucleus in apoptotic cells. May act as a carrier protein of GJA1 for its transport to the nucleus. May play a repressive role in the regulation of rDNA transcription. Preferentially binds GC-rich DNA in vitro. In cells, associates with ribosomal RNA (rRNA) chromatin, preferentially with rRNA promoter and transcribed regions. Involved in modulation of Toll-like receptor signaling. Required for the cAMP-dependent suppression of TNF-alpha in early stages of LPS-induced macrophage activation; the function probably implicates targeting of PKA to NFKB1. The polypeptide is A-kinase anchor protein 8 (Akap8) (Mus musculus (Mouse)).